A 33-amino-acid polypeptide reads, in one-letter code: Brevinin-2DYd (33 aa).

An intrachain disulfide couples cysteine 27 to cysteine 33.

As to expression, expressed by the skin glands.

The protein resides in the secreted. Functionally, antimicrobial peptide. A mixture of Brevinin-2DYc/2DYd is active against the Gram-positive bacterium S.aureus (MIC=15 uM) and the Gram-negative bacterium E.coli (MIC=15 uM). In Rana dybowskii (Dybovsky's frog), this protein is Brevinin-2DYd.